The following is a 685-amino-acid chain: Invasion protein InvA (685 aa).

8 helical membrane-spanning segments follow: residues 17 to 37 (ILVL…TYLV), 39 to 59 (FLIA…FYID), 61 to 81 (ILSF…RLAL), 110 to 130 (SLAV…IVIT), 197 to 217 (AIAG…VGMT), 235 to 255 (IGDG…AGFI), 274 to 294 (LLNN…MGTL), and 295 to 315 (PGFP…LFYF).

Belongs to the FHIPEP (flagella/HR/invasion proteins export pore) family.

The protein localises to the cell inner membrane. In terms of biological role, involved in the invasion of the cells of the intestinal epithelium. Could be involved in the translocation of the InvE protein. This is Invasion protein InvA (invA) from Salmonella typhi.